The primary structure comprises 296 residues: Ribosomal protein L11 methyltransferase (296 aa).

The S-adenosyl-L-methionine site is built by threonine 139, glycine 163, aspartate 185, and asparagine 232.

It belongs to the methyltransferase superfamily. PrmA family.

It is found in the cytoplasm. It catalyses the reaction L-lysyl-[protein] + 3 S-adenosyl-L-methionine = N(6),N(6),N(6)-trimethyl-L-lysyl-[protein] + 3 S-adenosyl-L-homocysteine + 3 H(+). Methylates ribosomal protein L11. This is Ribosomal protein L11 methyltransferase from Rippkaea orientalis (strain PCC 8801 / RF-1) (Cyanothece sp. (strain PCC 8801)).